Consider the following 464-residue polypeptide: Glutamate decarboxylase beta (464 aa).

Position 275 is an N6-(pyridoxal phosphate)lysine (Lys-275).

It belongs to the group II decarboxylase family. The cofactor is pyridoxal 5'-phosphate.

It catalyses the reaction L-glutamate + H(+) = 4-aminobutanoate + CO2. Its function is as follows. Converts internalized glutamate to GABA and increases the internal pH. Involved in glutamate-dependent acid resistance in gastric fluid. The polypeptide is Glutamate decarboxylase beta (gadB) (Listeria innocua serovar 6a (strain ATCC BAA-680 / CLIP 11262)).